We begin with the raw amino-acid sequence, 666 residues long: Secreted protein ARB_01864 (666 aa).

The signal sequence occupies residues 1-18; that stretch reads MRFSTLVSLAAWAAAALA. N-linked (GlcNAc...) asparagine glycosylation is found at Asn-160, Asn-216, Asn-342, Asn-405, Asn-594, Asn-600, and Asn-662. A disordered region spans residues 323–353; sequence RGSMKPRGVPNPTRRAIKGNATTSTQPYQHP.

The protein localises to the secreted. This is Secreted protein ARB_01864 from Arthroderma benhamiae (strain ATCC MYA-4681 / CBS 112371) (Trichophyton mentagrophytes).